The following is a 386-amino-acid chain: Ovalbumin (386 aa).

Gly-2 carries the N-acetylglycine modification. Residues 22–48 (HHANENIFYSPFTIISALAMVYLGAKD) constitute a signal peptide (not cleaved). The residue at position 69 (Ser-69) is a Phosphoserine. A disulfide bridge connects residues Cys-74 and Cys-121. N-linked (GlcNAc...) asparagine glycosylation is found at Asn-293 and Asn-312. A Phosphoserine modification is found at Ser-345. A glycan (N-linked (GlcNAc...) asparagine) is linked at Asn-372.

The protein belongs to the serpin family. Ov-serpin subfamily. In terms of processing, the signal sequence is not cleaved. The functional signal for membrane translocation of ovalbumin becomes accessible when the nascent chain is 50 to 60 residues long. The hydrophobic sequence which lies between residues 27 and 43 folds back on the preceding residues to form an amphipathic hairpin structure which is the signal element recognized by the membrane. In terms of tissue distribution, major protein of egg white.

It localises to the secreted. Its function is as follows. Storage protein of egg white. Lack protease inhibitory activity. This is Ovalbumin (SERPINB14) from Meleagris gallopavo (Wild turkey).